The following is a 307-amino-acid chain: NAD kinase 1 (307 aa).

D67 acts as the Proton acceptor in catalysis. NAD(+)-binding positions include 67-68 (DG), 149-150 (ND), R179, and D181.

Belongs to the NAD kinase family. It depends on a divalent metal cation as a cofactor.

The protein resides in the cytoplasm. It carries out the reaction NAD(+) + ATP = ADP + NADP(+) + H(+). Functionally, involved in the regulation of the intracellular balance of NAD and NADP, and is a key enzyme in the biosynthesis of NADP. Catalyzes specifically the phosphorylation on 2'-hydroxyl of the adenosine moiety of NAD to yield NADP. This Prochlorococcus marinus (strain SARG / CCMP1375 / SS120) protein is NAD kinase 1.